A 218-amino-acid chain; its full sequence is Small ribosomal subunit protein uS3c (218 aa).

Residues 47–118 form the KH type-2 domain; the sequence is VQKNIRISSG…KLNIAITRIS (72 aa).

This sequence belongs to the universal ribosomal protein uS3 family. In terms of assembly, part of the 30S ribosomal subunit.

It localises to the plastid. The protein localises to the chloroplast. This Lepidium virginicum (Virginia pepperweed) protein is Small ribosomal subunit protein uS3c (rps3).